We begin with the raw amino-acid sequence, 257 residues long: Probable S-adenosylmethionine-dependent methyltransferase MSMEG_2350/MSMEI_2290 (257 aa).

Belongs to the methyltransferase superfamily.

Probable S-adenosylmethionine-dependent methyltransferase required for the 6-O-methylation of the polysaccharide backbone of 6-O-methylglucosyl lipopolysaccharides (MGLP). This chain is Probable S-adenosylmethionine-dependent methyltransferase MSMEG_2350/MSMEI_2290, found in Mycolicibacterium smegmatis (strain ATCC 700084 / mc(2)155) (Mycobacterium smegmatis).